A 388-amino-acid polypeptide reads, in one-letter code: Amylovoran biosynthesis protein AmsL (388 aa).

Transmembrane regions (helical) follow at residues 24–44, 47–67, 97–117, 231–251, 297–317, and 359–379; these read VLLS…ISWF, LPQL…LGSL, FTVI…LGLF, FVIM…SPVI, FYWN…VWIW, and ISVS…NLFI.

Belongs to the polysaccharide synthase family.

Its subcellular location is the cell membrane. It functions in the pathway glycan metabolism; exopolysaccharide biosynthesis. Its function is as follows. Involved in the biosynthesis of amylovoran which functions as a virulence factor. The protein is Amylovoran biosynthesis protein AmsL (amsL) of Erwinia amylovora (Fire blight bacteria).